The following is a 167-amino-acid chain: Phospholipase A2 inhibitor alpha-like protein (167 aa).

The signal sequence occupies residues 1 to 19; sequence MQLILLSSLLLLGLSLANG. The 102-residue stretch at 62–163 folds into the C-type lectin domain; the sequence is GSERLYVTNK…CDEDLLVVCE (102 aa). Intrachain disulfides connect Cys83-Cys162 and Cys140-Cys154.

It belongs to the alpha-type phospholipase A2 inhibitor family. In terms of assembly, homotrimer.

It localises to the secreted. Its function is as follows. Has no PLA2 inhibitory activity. The protein is Phospholipase A2 inhibitor alpha-like protein of Elaphe climacophora (Japanese rat snake).